A 147-amino-acid chain; its full sequence is Anti-sigma F factor (147 aa).

The protein belongs to the anti-sigma-factor family.

It carries out the reaction L-seryl-[protein] + ATP = O-phospho-L-seryl-[protein] + ADP + H(+). It catalyses the reaction L-threonyl-[protein] + ATP = O-phospho-L-threonyl-[protein] + ADP + H(+). Its function is as follows. Binds to sigma F and blocks its ability to form an RNA polymerase holoenzyme (E-sigma F). Phosphorylates SpoIIAA on a serine residue. This phosphorylation may enable SpoIIAA to act as an anti-anti-sigma factor that counteracts SpoIIAB and thus releases sigma F from inhibition. This is Anti-sigma F factor from Heyndrickxia coagulans (Weizmannia coagulans).